The following is a 450-amino-acid chain: NADH-ubiquinone oxidoreductase chain 2 (450 aa).

The next 13 helical transmembrane spans lie at 25 to 45 (GTIT…IVAM), 58 to 78 (LTPY…MLLM), 90 to 110 (SPFY…FPLV), 113 to 133 (LIAL…LTGL), 145 to 165 (LLYF…SYFV), 186 to 206 (AFDY…MAPL), 219 to 239 (TYIT…WIFA), 248 to 268 (VTIL…LFQV), 272 to 292 (TMLA…MMSY), 295 to 315 (AFYI…LGML), 344 to 364 (LAFS…TPGF), 385 to 405 (AIVV…KVLF), and 414 to 436 (NFIN…SFFM).

Belongs to the complex I subunit 2 family.

It is found in the mitochondrion inner membrane. The catalysed reaction is a ubiquinone + NADH + 5 H(+)(in) = a ubiquinol + NAD(+) + 4 H(+)(out). In terms of biological role, core subunit of the mitochondrial membrane respiratory chain NADH dehydrogenase (Complex I) that is believed to belong to the minimal assembly required for catalysis. Complex I functions in the transfer of electrons from NADH to the respiratory chain. The immediate electron acceptor for the enzyme is believed to be ubiquinone. The sequence is that of NADH-ubiquinone oxidoreductase chain 2 (ND2) from Debaryomyces hansenii (strain ATCC 36239 / CBS 767 / BCRC 21394 / JCM 1990 / NBRC 0083 / IGC 2968) (Yeast).